Here is a 74-residue protein sequence, read N- to C-terminus: Antimicrobial peptide HsAp4 (74 aa).

The first 21 residues, 1–21 (MSRRRILILVLVTMLVKTMAG), serve as a signal peptide directing secretion. Positions 22–33 (MESKWVETTYEI) are excised as a propeptide. Arg65 is subject to Arginine amide. The propeptide occupies 69–74 (AISEQT).

It belongs to the non-disulfide-bridged peptide (NDBP) superfamily. Medium-length antimicrobial peptide (group 3) family. As to expression, expressed by the venom gland.

It localises to the secreted. The protein resides in the target cell membrane. Its function is as follows. Possesses antimicrobial activity against both Gram-negative and Gram-positive bacteria, as well as against the fungus C.tropicalis. Also possesses a relatively high hemolytic activity. May act by disrupting the integrity of the bacterial cell membrane. The chain is Antimicrobial peptide HsAp4 from Heterometrus spinifer (Asia giant forest scorpion).